The chain runs to 920 residues: Sensor histidine kinase SsrA (920 aa).

The Cytoplasmic portion of the chain corresponds to 1-19 (MNLLNLKNTLQTSLVIRLT). A helical transmembrane segment spans residues 20–40 (FLFLLTTIIIWLLSVLTAAYI). The Periplasmic portion of the chain corresponds to 41-291 (SMVQKRQHII…YGNLHNRILK (251 aa)). Residues 292-312 (IILQQIPFTLTALVLMTSAFC) form a helical membrane-spanning segment. Topologically, residues 313-920 (WLLHRSLAKP…RMIFKNYTIT (608 aa)) are cytoplasmic. One can recognise an HAMP domain in the interval 317–369 (RSLAKPLWRFVDVINKTATAPLSTRLPAQRLDELDSIAGAFNQLLDTLQVQYD). Residues 354-395 (AGAFNQLLDTLQVQYDNLENKVAERTQALNEAKKRAERANKR) are a coiled coil. The Histidine kinase domain maps to 402–614 (VISHELRTPM…CVSLVLPLQE (213 aa)). The ATP site is built by His-405 and Asp-549. A Phosphohistidine; by autocatalysis modification is found at His-405. Positions 690–808 (QILLVDDADI…TLARYISIAA (119 aa)) constitute a Response regulatory domain. Residue Asp-739 is modified to 4-aspartylphosphate.

Autophosphorylated.

It localises to the cell inner membrane. The enzyme catalyses ATP + protein L-histidine = ADP + protein N-phospho-L-histidine.. Its function is as follows. Member of the two-component regulatory system SsrA/SsrB (SpiR/SsrB) that is required for intracellular proliferation and systemic dissemination within the host. When inside acidic Salmonella-containing vesicles (SCV) within host cells the SsrA sensor kinase autophosphorylates and the phosphoryl group is transferred to the response regulator SsrB; phosphorylated SsrB activates the expression of genes encoding virulence proteins, including pathogenicity island 2 (SPI2) and other horizontally acquired genes, and antagonizes the action of transcriptional repressor hns (H-NS). The chain is Sensor histidine kinase SsrA from Salmonella typhimurium (strain LT2 / SGSC1412 / ATCC 700720).